A 565-amino-acid polypeptide reads, in one-letter code: Augmin complex subunit dgt3 (565 aa).

Coiled coils occupy residues 135 to 171 (ELQL…AKKA) and 212 to 241 (QDYD…IQFY).

It belongs to the HAUS3 family. As to quaternary structure, component of the augmin complex composed of dgt2, dgt3, dgt4, dgt5, dgt6, msd1, msd5 and wac. The complex interacts directly or indirectly with microtubules and is required for centrosome-independent generation of spindle microtubules.

Its subcellular location is the cytoplasm. It localises to the cytoskeleton. The protein resides in the spindle. Functionally, as part of the augmin complex, plays a role in centrosome-independent generation of spindle microtubules. The complex is required for mitotic spindle assembly through its involvement in localizing gamma-tubulin to spindle microtubules. In Drosophila melanogaster (Fruit fly), this protein is Augmin complex subunit dgt3.